The chain runs to 257 residues: Lysine-rich coiled-coil protein 1 (257 aa).

The disordered stretch occupies residues 145 to 257 (NTSAHQASYK…MLWDQSILGF (113 aa)). Over residues 152-162 (SYKHIHQKRKR) the composition is skewed to basic residues. 4 stretches are compositionally biased toward basic and acidic residues: residues 163 to 176 (HTEE…EERP), 183 to 193 (ACEEIDLDKYK), 200 to 212 (TEAE…TEKL), and 219 to 228 (RSRDVASKKE). Residues 210-248 (EKLKNRKEKRSRDVASKKEERKRRKEKKEQGQERTEEEM) adopt a coiled-coil conformation.

The sequence is that of Lysine-rich coiled-coil protein 1 (KRCC1) from Bos taurus (Bovine).